A 97-amino-acid chain; its full sequence is MNKLLIGLVNVYKKFISPVLPPTCRYYPTCSTYMIDALKKHGAILGLIMGISRIIRCNPFIKGGVDPVPDYFTLRRNPHPERYEDEIIAQAFHSNKK.

The protein belongs to the UPF0161 family.

It localises to the cell membrane. In terms of biological role, could be involved in insertion of integral membrane proteins into the membrane. The polypeptide is Putative membrane protein insertion efficiency factor (Lactobacillus gasseri (strain ATCC 33323 / DSM 20243 / BCRC 14619 / CIP 102991 / JCM 1131 / KCTC 3163 / NCIMB 11718 / NCTC 13722 / AM63)).